Reading from the N-terminus, the 188-residue chain is Probable DNA-directed RNA polymerase subunit delta (188 aa).

The HTH HARE-type domain occupies 14–83; it reads LSMIEVARAI…GENKWGLRSW (70 aa). Positions 119–188 are disordered; the sequence is EDAIDYSADD…EDEEDEDEEE (70 aa).

Belongs to the RpoE family. In terms of assembly, RNAP is composed of a core of 2 alpha, a beta and a beta' subunits. The core is associated with a delta subunit and one of several sigma factors.

Its function is as follows. Participates in both the initiation and recycling phases of transcription. In the presence of the delta subunit, RNAP displays an increased specificity of transcription, a decreased affinity for nucleic acids, and an increased efficiency of RNA synthesis because of enhanced recycling. In Streptococcus equi subsp. zooepidemicus (strain H70), this protein is Probable DNA-directed RNA polymerase subunit delta.